Consider the following 124-residue polypeptide: Small ribosomal subunit protein uS12 (124 aa).

3-methylthioaspartic acid is present on D89.

This sequence belongs to the universal ribosomal protein uS12 family. Part of the 30S ribosomal subunit. Contacts proteins S8 and S17. May interact with IF1 in the 30S initiation complex.

In terms of biological role, with S4 and S5 plays an important role in translational accuracy. Its function is as follows. Interacts with and stabilizes bases of the 16S rRNA that are involved in tRNA selection in the A site and with the mRNA backbone. Located at the interface of the 30S and 50S subunits, it traverses the body of the 30S subunit contacting proteins on the other side and probably holding the rRNA structure together. The combined cluster of proteins S8, S12 and S17 appears to hold together the shoulder and platform of the 30S subunit. This Vibrio cholerae serotype O1 (strain ATCC 39315 / El Tor Inaba N16961) protein is Small ribosomal subunit protein uS12.